We begin with the raw amino-acid sequence, 713 residues long: Undecaprenyl-diphosphooligosaccharide--protein glycotransferase (713 aa).

Over 1–11 (MLKKEYLKNPY) the chain is Cytoplasmic. Residues 12-35 (LVLFAMIILAYVFSVLCRFYWIWW) traverse the membrane as a helical segment. Residues 36-96 (ASEFNEYFFN…YWLYKITPFS (61 aa)) are Periplasmic-facing. The short motif at 52–54 (SND) is the DXD motif 1 element. Aspartate 54 is a binding site for Mn(2+). A helical membrane pass occupies residues 97–122 (FESIILYMSTFLSSLVVIPIILLANE). Topologically, residues 123 to 125 (YKR) are cytoplasmic. Residues 126–144 (PLMGFVAALLASVANSYYN) traverse the membrane as a helical segment. Residues 145-152 (RTMSGYYD) are Periplasmic-facing. Aspartate 152 serves as a coordination point for Mn(2+). A DXD motif 2 motif is present at residues 152 to 154 (DTD). The chain crosses the membrane as a helical span at residues 153–174 (TDMLVIVLPMFILFFMVRMILK). The Cytoplasmic portion of the chain corresponds to 175-176 (KD). A helical membrane pass occupies residues 177–192 (FFSLIALPLFIGIYLW). Residues 193–197 (WYPSS) lie on the Periplasmic side of the membrane. 194–196 (YPS) lines the [alpha-D-GalNAc-(1-&gt;4)]2-[beta-D-Glc-(1-&gt;3)]-[alpha-D-GalNAc-(1-&gt;4)]2-alpha-D-GalNAc-(1-&gt;3)-alpha-D-diNAcBac-tri-trans,hepta-cis-undecaprenyl diphosphate pocket. A helical membrane pass occupies residues 198-215 (YTLNVALIGLFLIYTLIF). At 216-220 (HRKEK) the chain is on the cytoplasmic side. Residues 221–233 (IFYIAVILSSLTL) traverse the membrane as a helical segment. At 234–237 (SNIA) the chain is on the periplasmic side. A helical transmembrane segment spans residues 238 to 254 (WFYQSAIIVILFALFAL). Over 255-260 (EQKRLN) the chain is Cytoplasmic. Residues 261–278 (FMIIGILGSATLIFLILS) traverse the membrane as a helical segment. Residues 279-324 (GGVDPILYQLKFYIFRNDESANLTQGFMYFNVNQTIQEVENVDFSE) are Periplasmic-facing. Tyrosine 291 contributes to the [alpha-D-GalNAc-(1-&gt;4)]2-[beta-D-Glc-(1-&gt;3)]-[alpha-D-GalNAc-(1-&gt;4)]2-alpha-D-GalNAc-(1-&gt;3)-alpha-D-diNAcBac-tri-trans,hepta-cis-undecaprenyl diphosphate binding site. The TIXE motif motif lies at 313–316 (TIQE). Mn(2+) is bound at residue glutamate 316. Residues 325-347 (FMRRISGSEIVFLFSLFGFVWLL) form a helical membrane-spanning segment. Topologically, residues 348–352 (RKHKS) are cytoplasmic. A helical membrane pass occupies residues 353-369 (MIMALPILVLGFLALKG). Topologically, residues 370–373 (GLRF) are periplasmic. Arginine 372 contacts [alpha-D-GalNAc-(1-&gt;4)]2-[beta-D-Glc-(1-&gt;3)]-[alpha-D-GalNAc-(1-&gt;4)]2-alpha-D-GalNAc-(1-&gt;3)-alpha-D-diNAcBac-tri-trans,hepta-cis-undecaprenyl diphosphate. A helical membrane pass occupies residues 374–396 (TIYSVPVMALGFGFLLSEFKAIL). The Cytoplasmic segment spans residues 397–406 (VKKYSQLTSN). Residues 407–427 (VCIVFATILTLAPVFIHIYNY) form a helical membrane-spanning segment. Topologically, residues 428–713 (KAPTVFSQNE…RDAKVFKLKI (286 aa)) are periplasmic. The segment at 457 to 459 (WWD) is interacts with target acceptor peptide in protein substrate. Positions 457–461 (WWDYG) match the WWDYG motif motif. Tyrosine 462 is a binding site for [alpha-D-GalNAc-(1-&gt;4)]2-[beta-D-Glc-(1-&gt;3)]-[alpha-D-GalNAc-(1-&gt;4)]2-alpha-D-GalNAc-(1-&gt;3)-alpha-D-diNAcBac-tri-trans,hepta-cis-undecaprenyl diphosphate. An N-linked (DATDGlc) asparagine glycan is attached at asparagine 534. Residues 568-575 (MSLIFSTV) carry the MI motif motif.

This sequence belongs to the STT3 family. Mg(2+) serves as cofactor. It depends on Mn(2+) as a cofactor.

The protein resides in the cell inner membrane. The enzyme catalyses tritrans,heptacis-undecaprenyl diphosphooligosaccharide + [protein]-L-asparagine = tritrans,heptacis-undecaprenyl diphosphate + a glycoprotein with the oligosaccharide chain attached by N-beta-D-glycosyl linkage to protein L-asparagine.. It functions in the pathway protein modification; protein glycosylation. Functionally, oligosaccharyltransferase that catalyzes the transfer of a preassembled heptasaccharide from a lipid donor to an asparagine residue in nascent polypeptide chains, affording a beta-linked glycan to the asparagine side chain of target proteins. Its function is as follows. Oligosaccharyl transferase (OST) that catalyzes the initial transfer of a defined glycan (GalNAc(2)GlcGalNAc(3)Bac(NAc)(2) in eubacteria, where Bac(NAc)(2) is di-N-acetyl bacillosamine) from the lipid carrier undecaprenol-pyrophosphate to an asparagine residue within an Asp/Glu-Asn-X-Ser/Thr consensus motif in nascent polypeptide chains, the first step in protein N-glycosylation. The chain is Undecaprenyl-diphosphooligosaccharide--protein glycotransferase (pglB) from Campylobacter jejuni (strain RM1221).